Reading from the N-terminus, the 225-residue chain is PKHD-type hydroxylase YbiX (225 aa).

The Fe2OG dioxygenase domain maps to 78-177 (TLSTPLFNRY…RVASFMWIQS (100 aa)). Fe cation-binding residues include H96, D98, and H158. R168 is a binding site for 2-oxoglutarate.

Fe(2+) serves as cofactor. Requires L-ascorbate as cofactor.

The chain is PKHD-type hydroxylase YbiX from Shigella dysenteriae serotype 1 (strain Sd197).